We begin with the raw amino-acid sequence, 556 residues long: Formate--tetrahydrofolate ligase (556 aa).

65-72 (TPAGEGKT) serves as a coordination point for ATP.

Belongs to the formate--tetrahydrofolate ligase family.

It carries out the reaction (6S)-5,6,7,8-tetrahydrofolate + formate + ATP = (6R)-10-formyltetrahydrofolate + ADP + phosphate. Its pathway is one-carbon metabolism; tetrahydrofolate interconversion. This Maricaulis maris (strain MCS10) (Caulobacter maris) protein is Formate--tetrahydrofolate ligase.